The primary structure comprises 72 residues: Translation initiation factor IF-1 (72 aa).

Residues 1–72 form the S1-like domain; that stretch reads MAKEDVIEVE…TRGRITYRYK (72 aa). The residue at position 60 (Tyr60) is a Phosphotyrosine.

It belongs to the IF-1 family. As to quaternary structure, component of the 30S ribosomal translation pre-initiation complex which assembles on the 30S ribosome in the order IF-2 and IF-3, IF-1 and N-formylmethionyl-tRNA(fMet); mRNA recruitment can occur at any time during PIC assembly.

Its subcellular location is the cytoplasm. Its function is as follows. One of the essential components for the initiation of protein synthesis. Stabilizes the binding of IF-2 and IF-3 on the 30S subunit to which N-formylmethionyl-tRNA(fMet) subsequently binds. Helps modulate mRNA selection, yielding the 30S pre-initiation complex (PIC). Upon addition of the 50S ribosomal subunit IF-1, IF-2 and IF-3 are released leaving the mature 70S translation initiation complex. This Shouchella clausii (strain KSM-K16) (Alkalihalobacillus clausii) protein is Translation initiation factor IF-1.